We begin with the raw amino-acid sequence, 220 residues long: Nicotinamidase (220 aa).

Asp-11 is an active-site residue. Residues Asp-53, His-55, and His-94 each contribute to the Zn(2+) site. The active site involves Lys-119. Catalysis depends on Cys-163, which acts as the Nucleophile.

The protein belongs to the isochorismatase family.

The protein resides in the cytoplasm. It is found in the nucleus. It localises to the peroxisome. The catalysed reaction is nicotinamide + H2O = nicotinate + NH4(+). The protein operates within cofactor biosynthesis; nicotinate biosynthesis; nicotinate from nicotinamide: step 1/1. Catalyzes the deamidation of nicotinamide, an early step in the NAD(+) salvage pathway. In Schizosaccharomyces pombe (strain 972 / ATCC 24843) (Fission yeast), this protein is Nicotinamidase (pnc1).